Reading from the N-terminus, the 467-residue chain is MSIGNIVQCIGAVVDIEFPRDAMPKVYDALVLEDSGDASFAEKGLTFEVQQQLGDGVVRTIALGSSDGLRRGMEVKSTGAPISVPVGHGTLGRIMDVLGRPIDEAGPIASDELRAIHQKAPKFDELSPSVDLLETGIKVIDLVCPFAKGGKVGLFGGAGVGKTVNMMELINNIAKQHSGLSVFAGVGERTREGNDFYHEMKDSNVLDKVAMVFGQMNEPPGNRLRVALTGLTMAERFRDEGRDILFFVDNIYRYTLAGTEVSALLGRMPSAVGYQPTLAEEMGKLQERITSTKTGSITSIQAVYVPADDLTDPSPATTFLHLDSTVVLSRDIAALGIYPAVDPLDSTSRQLDPQVVGTEHYEVARRVQQTLQRYKELRDIIAILGMDELSPEDKLAVNRARKIQRFLSQPFHVAEVFTGSPGKYVPLKETIRGFKMLVDGECDHLPEQAFYMVGSIDEAFEKAKKLQ.

Residue 156 to 163 coordinates ATP; that stretch reads GGAGVGKT.

Belongs to the ATPase alpha/beta chains family. F-type ATPases have 2 components, CF(1) - the catalytic core - and CF(0) - the membrane proton channel. CF(1) has five subunits: alpha(3), beta(3), gamma(1), delta(1), epsilon(1). CF(0) has three main subunits: a(1), b(2) and c(9-12). The alpha and beta chains form an alternating ring which encloses part of the gamma chain. CF(1) is attached to CF(0) by a central stalk formed by the gamma and epsilon chains, while a peripheral stalk is formed by the delta and b chains.

The protein resides in the cell inner membrane. The enzyme catalyses ATP + H2O + 4 H(+)(in) = ADP + phosphate + 5 H(+)(out). In terms of biological role, produces ATP from ADP in the presence of a proton gradient across the membrane. The catalytic sites are hosted primarily by the beta subunits. This is ATP synthase subunit beta from Cupriavidus necator (strain ATCC 17699 / DSM 428 / KCTC 22496 / NCIMB 10442 / H16 / Stanier 337) (Ralstonia eutropha).